A 720-amino-acid polypeptide reads, in one-letter code: Secreted RxLR effector protein 138 (720 aa).

The signal sequence occupies residues 1–20 (MRSAFYVAIVLLVAAGSQTA). A RxLR-dEER motif is present at residues 56 to 71 (RNLKDDFMFSAGDEER). Residues 264–335 (ESNTRKRNNV…VAPPEPSRLD (72 aa)) are disordered. Over residues 320 to 335 (KQHDHRVAPPEPSRLD) the composition is skewed to basic and acidic residues. An N-linked (GlcNAc...) asparagine glycan is attached at asparagine 609.

Belongs to the RxLR effector family.

Its subcellular location is the secreted. It localises to the host nucleus. Functionally, secreted effector that acts as an elicitor that induces cell death in host plant cells. This is Secreted RxLR effector protein 138 from Plasmopara viticola (Downy mildew of grapevine).